A 523-amino-acid chain; its full sequence is 2,3-bisphosphoglycerate-independent phosphoglycerate mutase (523 aa).

Mn(2+) contacts are provided by aspartate 13 and serine 63. Serine 63 serves as the catalytic Phosphoserine intermediate. Substrate-binding positions include histidine 124, 156–157 (RD), arginine 188, arginine 194, 268–271 (RSDR), and lysine 341. Aspartate 408, histidine 412, aspartate 449, histidine 450, and histidine 467 together coordinate Mn(2+).

This sequence belongs to the BPG-independent phosphoglycerate mutase family. In terms of assembly, monomer. Mn(2+) is required as a cofactor.

It catalyses the reaction (2R)-2-phosphoglycerate = (2R)-3-phosphoglycerate. It participates in carbohydrate degradation; glycolysis; pyruvate from D-glyceraldehyde 3-phosphate: step 3/5. Catalyzes the interconversion of 2-phosphoglycerate and 3-phosphoglycerate. The chain is 2,3-bisphosphoglycerate-independent phosphoglycerate mutase from Salinibacter ruber (strain DSM 13855 / M31).